Reading from the N-terminus, the 139-residue chain is Stress-related protein 1 (139 aa).

Residues 1–12 (MTSESSTPTGST) are compositionally biased toward polar residues. The interval 1–86 (MTSESSTPTG…AERPGSATTP (86 aa)) is disordered. Low complexity-rich tracts occupy residues 14–53 (ALPA…SLVV) and 60–74 (SPVV…TRPR). Serine 60 carries the post-translational modification Phosphoserine.

As to expression, embryo.

In terms of biological role, involved in drought, heat, cold, and/or salt tolerance. The polypeptide is Stress-related protein 1 (SRP1) (Zea mays (Maize)).